Consider the following 160-residue polypeptide: SsrA-binding protein (160 aa).

Belongs to the SmpB family.

It localises to the cytoplasm. In terms of biological role, required for rescue of stalled ribosomes mediated by trans-translation. Binds to transfer-messenger RNA (tmRNA), required for stable association of tmRNA with ribosomes. tmRNA and SmpB together mimic tRNA shape, replacing the anticodon stem-loop with SmpB. tmRNA is encoded by the ssrA gene; the 2 termini fold to resemble tRNA(Ala) and it encodes a 'tag peptide', a short internal open reading frame. During trans-translation Ala-aminoacylated tmRNA acts like a tRNA, entering the A-site of stalled ribosomes, displacing the stalled mRNA. The ribosome then switches to translate the ORF on the tmRNA; the nascent peptide is terminated with the 'tag peptide' encoded by the tmRNA and targeted for degradation. The ribosome is freed to recommence translation, which seems to be the essential function of trans-translation. The sequence is that of SsrA-binding protein from Proteus mirabilis (strain HI4320).